The following is a 1637-amino-acid chain: Stress response protein NST1 (1637 aa).

Over residues 1–17 (MSNRGNLNLNLPPSSGK) the composition is skewed to polar residues. Disordered regions lie at residues 1–155 (MSNR…EITN), 221–252 (HQAS…HASH), 442–494 (LKMN…SQQL), 504–523 (KNNL…PLQH), 681–734 (KTPY…EIDD), 746–825 (QHHH…EEEK), 871–1036 (AKRE…SKHV), 1049–1075 (SKQN…EENP), 1176–1299 (NSSQ…GAII), and 1512–1534 (YTQQ…QYPL). Basic and acidic residues predominate over residues 24 to 33 (VHFELSKEKN). 2 stretches are compositionally biased toward low complexity: residues 34–53 (NSTN…SNNT) and 64–113 (NDNN…QQQS). A compositionally biased stretch (basic residues) spans 124–134 (AKKRKKKKSKK). Residues 135-155 (SSNNNGNNSNTNSNSNSEITN) are compositionally biased toward low complexity. Residues 446–470 (QRQQSQSQSQSQSQQQRDVQTAQSQ) are compositionally biased toward low complexity. Residues 471-487 (VLSKDSSLKNANTSMNK) are compositionally biased toward polar residues. Over residues 692–706 (PAATSQDREQQVQPN) the composition is skewed to polar residues. A compositionally biased stretch (basic and acidic residues) spans 717–734 (DHEHEHEHEHEHEHEIDD). Over residues 754–808 (EEYDEEDEEDDEEYEYGDDEEEEDEEDEEEGEDEELEEVVEDDVDEEILDDEEEF) the composition is skewed to acidic residues. A coiled-coil region spans residues 855–1023 (KDNTRKLFEE…KQLEKEAAVS (169 aa)). Composition is skewed to basic and acidic residues over residues 871 to 887 (AKRE…EKAK) and 896 to 1021 (AKEE…KEAA). Residues 1049-1063 (SKQNQAQNGNQSHLP) are compositionally biased toward polar residues. Low complexity predominate over residues 1176–1199 (NSSQGSPWTTNSTLSSNLGSTGLS). Residues 1201–1228 (GQGQTVSGVNTNLPSSIGITSGGASQIF) show a composition bias toward polar residues. Positions 1234 to 1257 (PQLQPHQPQQQQQQQQQQQQQQQQ) are enriched in low complexity. The span at 1258–1267 (NYFSPFNSFS) shows a compositional bias: polar residues. Low complexity-rich tracts occupy residues 1282 to 1299 (TTNI…GAII) and 1514 to 1534 (QQQQ…QYPL).

Belongs to the NST1 family.

The protein resides in the cytoplasm. Its function is as follows. May act as a negative regulator of salt tolerance. The protein is Stress response protein NST1 (NST1) of Lodderomyces elongisporus (strain ATCC 11503 / CBS 2605 / JCM 1781 / NBRC 1676 / NRRL YB-4239) (Yeast).